The primary structure comprises 168 residues: Photosystem I assembly protein Ycf3 (168 aa).

3 TPR repeats span residues 35 to 68 (AFTY…EIDP), 72 to 105 (SYIL…NPFL), and 120 to 153 (GEQA…TPGN).

The protein belongs to the Ycf3 family. As to quaternary structure, interacts with Y3IP1.

The protein resides in the plastid. It localises to the chloroplast thylakoid membrane. Functionally, essential for the assembly of the photosystem I (PSI) complex. May act as a chaperone-like factor to guide the assembly of the PSI subunits. This is Photosystem I assembly protein Ycf3 from Arabidopsis thaliana (Mouse-ear cress).